The following is a 534-amino-acid chain: Peptide chain release factor 3 (534 aa).

Residues 9 to 278 (ARRRTFAIIS…FFVEHAPSPQ (270 aa)) form the tr-type G domain. GTP contacts are provided by residues 18–25 (SHPDAGKT), 86–90 (DTPGH), and 140–143 (NKLD).

Belongs to the TRAFAC class translation factor GTPase superfamily. Classic translation factor GTPase family. PrfC subfamily.

The protein localises to the cytoplasm. Functionally, increases the formation of ribosomal termination complexes and stimulates activities of RF-1 and RF-2. It binds guanine nucleotides and has strong preference for UGA stop codons. It may interact directly with the ribosome. The stimulation of RF-1 and RF-2 is significantly reduced by GTP and GDP, but not by GMP. The protein is Peptide chain release factor 3 of Xylella fastidiosa (strain M12).